The chain runs to 250 residues: Histone H1.2 (250 aa).

Over residues 1–11 the composition is skewed to polar residues; it reads MSDSAVATSAS. Disordered regions lie at residues 1 to 53 and 101 to 250; these read MSDS…QMVD and KLIQ…ATKK. Low complexity predominate over residues 27-42; the sequence is KKAAATPKSKKSTAAP. One can recognise an H15 domain in the interval 44–118; that stretch reads SHPPTQQMVD…GASGSFKLSR (75 aa). The span at 120-133 shows a compositional bias: basic and acidic residues; the sequence is AKKDPKPKASAVEK. Residues 151–161 show a composition bias toward low complexity; that stretch reads STSTTKKAAGA. Over residues 174-191 the composition is skewed to basic and acidic residues; it reads KSVEKKRADKAKAKDAKK. Residues 192-211 show a composition bias toward low complexity; it reads TGTIKAKPTTAKAKSSATKP. 2 stretches are compositionally biased toward basic residues: residues 212–225 and 235–250; these read KTPKPKTKSAKPKK and TAVKKPKAKTASATKK.

Belongs to the histone H1/H5 family.

The protein localises to the nucleus. It is found in the chromosome. Functionally, histones H1 are necessary for the condensation of nucleosome chains into higher-order structures. The polypeptide is Histone H1.2 (His1.2) (Drosophila virilis (Fruit fly)).